The following is a 219-amino-acid chain: MEMHLNDMEVRVLGCLIEKELTTPEYYPLTLNALTNACNQKSNRDPVLTREEVEVVRALDSLKFKQLALLSAEGGRVPKYRHTLVEKLRLDPPELAVLAELLLRGPQTVGELRTRGERMHPFPDLAAVEEVLGELMARTPPLVTRLPRQQGRKESRHAHLFAGEPELATAELTPSPEAARLKVMAENERIAKLEEEVAGLRSEVVELRRLVDEFKSQFE.

This sequence belongs to the UPF0502 family.

The protein is UPF0502 protein Gura_0277 of Geotalea uraniireducens (strain Rf4) (Geobacter uraniireducens).